The chain runs to 379 residues: Armadillo repeat-containing X-linked protein 3 (379 aa).

The Mitochondrial intermembrane portion of the chain corresponds to 1–6 (MGYARK). Mitochondrion outer membrane (MOM)-targeting sequence stretches follow at residues 1–6 (MGYARK) and 26–37 (RLTRGRKQNKEK). Residues 7–29 (VGWVTAGLVIGAGACYCIYRLTR) form a helical; Signal-anchor membrane-spanning segment. Residues 30 to 379 (GRKQNKEKMA…TERMFPKSQE (350 aa)) are Cytoplasmic-facing. The interval 34–69 (NKEKMAEGGPGDVEDAGDCSGARYNDWSDDDDDSNE) is disordered. 3 positions are modified to phosphoserine: S61, S67, and S72. The interval 89 to 98 (RARARARARA) is nuclear localization signal. S110 carries the post-translational modification Phosphoserine. ARM repeat units follow at residues 111–151 (PNSD…NNAA), 153–192 (AFNR…NLSV), and 233–272 (VTNE…NLAE).

Belongs to the eutherian X-chromosome-specific Armcx family. As to quaternary structure, interacts (via ARM domain) with MIRO1, MIRO2 and TRAK2. The interaction with Miro is calcium-dependent. Interacts with Sox10.

Its subcellular location is the mitochondrion outer membrane. The protein localises to the cytoplasm. It is found in the nucleus. In terms of biological role, regulates mitochondrial aggregation and transport in axons in living neurons. May link mitochondria to the Trak2-kinesin motor complex via its interaction with Miro and Trak2. Mitochondrial distribution and dynamics is regulated through Armcx3 protein degradation, which is promoted by PCK and negatively regulated by Wnt1. Enhances the Sox10-mediated transactivation of the neuronal acetylcholine receptor subunit alpha-3 and beta-4 subunit gene promoters. The chain is Armadillo repeat-containing X-linked protein 3 (Armcx3) from Rattus norvegicus (Rat).